A 184-amino-acid polypeptide reads, in one-letter code: UPF0302 protein OB1778 (184 aa).

This sequence belongs to the UPF0302 family.

This Oceanobacillus iheyensis (strain DSM 14371 / CIP 107618 / JCM 11309 / KCTC 3954 / HTE831) protein is UPF0302 protein OB1778.